The chain runs to 333 residues: Ketol-acid reductoisomerase (NADP(+)) (333 aa).

Positions 2 to 182 constitute a KARI N-terminal Rossmann domain; sequence AKLYYEKDCN…GGARAGVLKT (181 aa). NADP(+) is bound by residues 25–28, Ser51, Ser53, and 83–86; these read YGSQ and DEKQ. His108 is an active-site residue. Gly134 lines the NADP(+) pocket. Residues 183 to 328 enclose the KARI C-terminal knotted domain; the sequence is TFKEETETDL…KELRDMMSWS (146 aa). Mg(2+) contacts are provided by Asp191, Glu195, Glu227, and Glu231. Residue Ser252 coordinates substrate.

It belongs to the ketol-acid reductoisomerase family. Requires Mg(2+) as cofactor.

The enzyme catalyses (2R)-2,3-dihydroxy-3-methylbutanoate + NADP(+) = (2S)-2-acetolactate + NADPH + H(+). It catalyses the reaction (2R,3R)-2,3-dihydroxy-3-methylpentanoate + NADP(+) = (S)-2-ethyl-2-hydroxy-3-oxobutanoate + NADPH + H(+). The protein operates within amino-acid biosynthesis; L-isoleucine biosynthesis; L-isoleucine from 2-oxobutanoate: step 2/4. It participates in amino-acid biosynthesis; L-valine biosynthesis; L-valine from pyruvate: step 2/4. In terms of biological role, involved in the biosynthesis of branched-chain amino acids (BCAA). Catalyzes an alkyl-migration followed by a ketol-acid reduction of (S)-2-acetolactate (S2AL) to yield (R)-2,3-dihydroxy-isovalerate. In the isomerase reaction, S2AL is rearranged via a Mg-dependent methyl migration to produce 3-hydroxy-3-methyl-2-ketobutyrate (HMKB). In the reductase reaction, this 2-ketoacid undergoes a metal-dependent reduction by NADPH to yield (R)-2,3-dihydroxy-isovalerate. The polypeptide is Ketol-acid reductoisomerase (NADP(+)) (Alkaliphilus metalliredigens (strain QYMF)).